The sequence spans 957 residues: MTQTLSQLENRGAFIERHIGPDAAQQQEMLNAVGAESLNALTGQIVPKDIQLATPPQVGEAATEYAALAELKAIAGRNKRFTSYIGMGYTAVQLPPVILRNMLENPGWYTAYTPYQPEVSQGRLEALLNFQQVTLDLTGLDMASASLLDEATAAAEAMAMAKRVSKLKNANRFFVASDVHPQTLDVVRTRAETFGFDVIVDDAAKALDHQDVFGVLLQQVGSTGEIHDYSALISELKARKVIVSVAADFMALVLLTAPGKQGADIVFGSAQRFGVPMGYGGPHAAFFAAKDEFKRSMPGRIIGVSKDAAGNTALRMAMQTREQHIRREKANSNICTSQVLLANIASLYAVYHGPVGLKRIANRIHRLTDILAAGLQQKGLKLRHAHYFDTLCVEVADKAAVLARAEAAEINLRSDIHNAVGITLDETTTRENVAQLFNVLLGGSHGLNIETLDKDVALDSRSIQQSMLRDDAILTHPVFNRYHSETEMMRYMHSLERKDLALNQAMIPLGSCTMKLNAAAEMIPITWPEFAELHPFCPPEQAEGYHQMISQLSDWLVKLTGYDAVCMQPNSGAQGEYAGLLAIRHYHESRNEGHRDICLIPASAHGTNPASAHMAGMQVVVVACDKNGNIDLDDLRAKAEQHAANLSCIMVTYPSTHGVYEETIREVCEVVHQFGGQVYLDGANMNAQVGITSPGFIGADVSHLNLHKTFCIPHGGGGPGMGPIGVKAHLAPFVPGHSVVQIEGMLTRQGAVSAAPFGSASILPISWMYIRMMGAEGLKQASQVAILNANYIASRLKDAYPVLYTGRDGRVAHECILDIRPLKEETGISELDIAKRLIDYGFHAPTMSFPVAGTLMVEPTESEGKAELDRFIDAMLAIRAEIDQVKAGVWPLEDNPLVNAPHIQSELVAEWAHPYSREVAVFPAGVADKYWPTVKRLDDVYGDRNLFCSCVPISDYQ.

The residue at position 708 (K708) is an N6-(pyridoxal phosphate)lysine.

The protein belongs to the GcvP family. In terms of assembly, the glycine cleavage system is composed of four proteins: P, T, L and H. Pyridoxal 5'-phosphate serves as cofactor.

It carries out the reaction N(6)-[(R)-lipoyl]-L-lysyl-[glycine-cleavage complex H protein] + glycine + H(+) = N(6)-[(R)-S(8)-aminomethyldihydrolipoyl]-L-lysyl-[glycine-cleavage complex H protein] + CO2. Functionally, the glycine cleavage system catalyzes the degradation of glycine. The P protein binds the alpha-amino group of glycine through its pyridoxal phosphate cofactor; CO(2) is released and the remaining methylamine moiety is then transferred to the lipoamide cofactor of the H protein. The polypeptide is Glycine dehydrogenase (decarboxylating) (Salmonella dublin (strain CT_02021853)).